Here is a 471-residue protein sequence, read N- to C-terminus: MATGKILQITGVVIDAEFPADGLPQIYNALEIPLGEGRSSLICEVQQQLGDSVVRAVAMSTTDGLVRGMDVIDTGAPISVPVGPETLGRVFDVQGRPIDGEGAVGTTKTMPIHRPAPTFEEQSNRAELFETGIKVIDLIAPFTKGGKTGVFGGAGVGKTVIIQELISNIAKEQSGYSVFAGVGERSREGNDLIHEMKDSKIPGTDQTVFDKTVMVFGQMNEPPGARLRVALSALTMAEYFREEGRDVLLFVDNIFRFTQAGSEVSALLGRMPSQVGYQPTLGTEMGELQERITSTKTGSITSLQAVYVPADDYTDPAPATTFAHLDATISLERSISEKGIYPAVDPLASTSRILDPNIVGEEHYRVATEVQRMLQRYKDLQDIIAILGVEELSDDDKLTVSRARKLERFFSQPFGVAEVFTNIPGKYVAVGDTVKSFARVLAGEFDHIPESFFFMKGGIDDVVAAYDASKQ.

Position 152-159 (152-159 (GGAGVGKT)) interacts with ATP.

This sequence belongs to the ATPase alpha/beta chains family. As to quaternary structure, F-type ATPases have 2 components, CF(1) - the catalytic core - and CF(0) - the membrane proton channel. CF(1) has five subunits: alpha(3), beta(3), gamma(1), delta(1), epsilon(1). CF(0) has three main subunits: a(1), b(2) and c(9-12). The alpha and beta chains form an alternating ring which encloses part of the gamma chain. CF(1) is attached to CF(0) by a central stalk formed by the gamma and epsilon chains, while a peripheral stalk is formed by the delta and b chains.

It localises to the cell membrane. The catalysed reaction is ATP + H2O + 4 H(+)(in) = ADP + phosphate + 5 H(+)(out). Produces ATP from ADP in the presence of a proton gradient across the membrane. The catalytic sites are hosted primarily by the beta subunits. The polypeptide is ATP synthase subunit beta (Herpetosiphon aurantiacus (strain ATCC 23779 / DSM 785 / 114-95)).